A 320-amino-acid chain; its full sequence is Ribosomal protein L11 methyltransferase (320 aa).

Threonine 165, glycine 186, aspartate 208, and asparagine 251 together coordinate S-adenosyl-L-methionine.

Belongs to the methyltransferase superfamily. PrmA family.

It localises to the cytoplasm. The catalysed reaction is L-lysyl-[protein] + 3 S-adenosyl-L-methionine = N(6),N(6),N(6)-trimethyl-L-lysyl-[protein] + 3 S-adenosyl-L-homocysteine + 3 H(+). Its function is as follows. Methylates ribosomal protein L11. The chain is Ribosomal protein L11 methyltransferase from Limosilactobacillus fermentum (strain NBRC 3956 / LMG 18251) (Lactobacillus fermentum).